Consider the following 214-residue polypeptide: MITIALSKGRIFEETTPLLAAAGITALEDPEASRKLILPTNRSDVRLIIVRATDVPTYVQYGAADLGIAGKDVLDEHGGEGLYQPLDLNIARCRMMVAVREDFDYVGSIRRGARLKVVTKYVKTAREHFAAKGMHVDLIKLYGSMELGPLVGLADAIVDLVSTGGTLRANNLKAVEEITDISSRLVVNQASLKLKRDQLQPIMDAFAQAVAANQ.

This sequence belongs to the ATP phosphoribosyltransferase family. Short subfamily. As to quaternary structure, heteromultimer composed of HisG and HisZ subunits.

It is found in the cytoplasm. The catalysed reaction is 1-(5-phospho-beta-D-ribosyl)-ATP + diphosphate = 5-phospho-alpha-D-ribose 1-diphosphate + ATP. It functions in the pathway amino-acid biosynthesis; L-histidine biosynthesis; L-histidine from 5-phospho-alpha-D-ribose 1-diphosphate: step 1/9. Functionally, catalyzes the condensation of ATP and 5-phosphoribose 1-diphosphate to form N'-(5'-phosphoribosyl)-ATP (PR-ATP). Has a crucial role in the pathway because the rate of histidine biosynthesis seems to be controlled primarily by regulation of HisG enzymatic activity. The sequence is that of ATP phosphoribosyltransferase from Methylobacillus flagellatus (strain ATCC 51484 / DSM 6875 / VKM B-1610 / KT).